The following is a 129-amino-acid chain: Lysozyme C (129 aa).

The 129-residue stretch at Lys-1–Leu-129 folds into the C-type lysozyme domain. 4 cysteine pairs are disulfide-bonded: Cys-6–Cys-127, Cys-30–Cys-115, Cys-64–Cys-80, and Cys-76–Cys-94. Residues Glu-35 and Asp-52 contribute to the active site.

It belongs to the glycosyl hydrolase 22 family. Monomer.

It is found in the secreted. The catalysed reaction is Hydrolysis of (1-&gt;4)-beta-linkages between N-acetylmuramic acid and N-acetyl-D-glucosamine residues in a peptidoglycan and between N-acetyl-D-glucosamine residues in chitodextrins.. Lysozymes have primarily a bacteriolytic function; those in tissues and body fluids are associated with the monocyte-macrophage system and enhance the activity of immunoagents. The sequence is that of Lysozyme C (LYZ) from Numida meleagris (Helmeted guineafowl).